Reading from the N-terminus, the 342-residue chain is Phosphoribosylformylglycinamidine cyclo-ligase (342 aa).

Belongs to the AIR synthase family.

Its subcellular location is the cytoplasm. It carries out the reaction 2-formamido-N(1)-(5-O-phospho-beta-D-ribosyl)acetamidine + ATP = 5-amino-1-(5-phospho-beta-D-ribosyl)imidazole + ADP + phosphate + H(+). Its pathway is purine metabolism; IMP biosynthesis via de novo pathway; 5-amino-1-(5-phospho-D-ribosyl)imidazole from N(2)-formyl-N(1)-(5-phospho-D-ribosyl)glycinamide: step 2/2. The polypeptide is Phosphoribosylformylglycinamidine cyclo-ligase (Staphylococcus aureus (strain MRSA252)).